We begin with the raw amino-acid sequence, 141 residues long: Large ribosomal subunit protein uL11 (141 aa).

Belongs to the universal ribosomal protein uL11 family. As to quaternary structure, part of the ribosomal stalk of the 50S ribosomal subunit. Interacts with L10 and the large rRNA to form the base of the stalk. L10 forms an elongated spine to which L12 dimers bind in a sequential fashion forming a multimeric L10(L12)X complex. Post-translationally, one or more lysine residues are methylated.

Its function is as follows. Forms part of the ribosomal stalk which helps the ribosome interact with GTP-bound translation factors. The sequence is that of Large ribosomal subunit protein uL11 from Oceanobacillus iheyensis (strain DSM 14371 / CIP 107618 / JCM 11309 / KCTC 3954 / HTE831).